We begin with the raw amino-acid sequence, 324 residues long: Cyclin-dependent kinase C-3 (324 aa).

A Protein kinase domain is found at 27-320; it reads FRRIRKIGEG…AHDALCAAYF (294 aa). ATP-binding positions include 33-41 and Lys-56; that span reads IGEGTYGEV. Residue Thr-37 is modified to Phosphothreonine. The residue at position 38 (Tyr-38) is a Phosphotyrosine. Asp-160 acts as the Proton acceptor in catalysis. At Thr-193 the chain carries Phosphothreonine.

It belongs to the protein kinase superfamily. CMGC Ser/Thr protein kinase family. CDC2/CDKX subfamily.

The enzyme catalyses L-seryl-[protein] + ATP = O-phospho-L-seryl-[protein] + ADP + H(+). The catalysed reaction is L-threonyl-[protein] + ATP = O-phospho-L-threonyl-[protein] + ADP + H(+). It carries out the reaction [DNA-directed RNA polymerase] + ATP = phospho-[DNA-directed RNA polymerase] + ADP + H(+). The protein is Cyclin-dependent kinase C-3 (CDKC-1) of Oryza sativa subsp. japonica (Rice).